We begin with the raw amino-acid sequence, 486 residues long: Ty transcription activator TEC1 (486 aa).

Ser2 is modified (N-acetylserine). The TEA DNA-binding region spans 125–199 (WTIGCDKWSE…QVWKKTIQNK (75 aa)). Position 325 is a phosphoserine (Ser325). 2 disordered regions span residues 372–410 (EHES…SRPV) and 465–486 (HYEH…GNFY). The span at 377–388 (PEFSSNSNSGSE) shows a compositional bias: low complexity. Positions 472 to 486 (QRNFTPSNQSHGNFY) are enriched in polar residues.

It belongs to the TEC1 family.

It is found in the nucleus. TEC1 is involved in the activation of TY1 and TY1-mediated gene expression. It is not involved in mating or sporulation processes. The sequence is that of Ty transcription activator TEC1 (TEC1) from Saccharomyces cerevisiae (strain ATCC 204508 / S288c) (Baker's yeast).